The sequence spans 215 residues: Probable phosphoglycerate mutase GpmB (215 aa).

Substrate contacts are provided by residues 8–15 (RHGETQWN), 21–22 (QG), Arg58, Lys60, 82–85 (ELDM), 104–105 (RR), and 151–152 (GI). His9 serves as the catalytic Tele-phosphohistidine intermediate. The Proton donor/acceptor role is filled by Glu82.

This sequence belongs to the phosphoglycerate mutase family. GpmB subfamily.

The catalysed reaction is (2R)-2-phosphoglycerate = (2R)-3-phosphoglycerate. It functions in the pathway carbohydrate degradation; glycolysis; pyruvate from D-glyceraldehyde 3-phosphate: step 3/5. The protein is Probable phosphoglycerate mutase GpmB of Salmonella paratyphi C (strain RKS4594).